Reading from the N-terminus, the 446-residue chain is Probable cytosolic iron-sulfur protein assembly protein 1 (446 aa).

WD repeat units follow at residues 17-59, 63-106, 143-182, 192-241, 247-291, 330-368, and 398-446; these read AFKP…AHSN, GHTR…PLEE, GHEN…EGDD, EHDG…EWAC, GHSS…PEAS, VHTR…NPST, and GHGP…SIEL. Residues 106–128 are compositionally biased toward basic and acidic residues; sequence EGTKKGESTEIDVTRRRNNNDSD. Residues 106 to 133 are disordered; the sequence is EGTKKGESTEIDVTRRRNNNDSDKDNDD.

Belongs to the WD repeat CIA1 family.

Essential component of the cytosolic iron-sulfur (Fe/S) protein assembly machinery. Required for the maturation of extramitochondrial Fe/S proteins. This is Probable cytosolic iron-sulfur protein assembly protein 1 from Pyricularia oryzae (strain 70-15 / ATCC MYA-4617 / FGSC 8958) (Rice blast fungus).